Reading from the N-terminus, the 319-residue chain is N-acetylneuraminate lyase (319 aa).

Aceneuramate is bound by residues Thr-51 and Thr-52. Catalysis depends on Tyr-143, which acts as the Proton donor. Catalysis depends on Lys-173, which acts as the Schiff-base intermediate with substrate. Aceneuramate contacts are provided by Ser-175, Gly-199, Asp-201, Glu-202, and Ser-218.

The protein belongs to the DapA family. NanA subfamily. As to quaternary structure, homotetramer.

The protein resides in the cytoplasm. It catalyses the reaction aceneuramate = aldehydo-N-acetyl-D-mannosamine + pyruvate. It participates in amino-sugar metabolism; N-acetylneuraminate degradation. Functionally, catalyzes the cleavage of N-acetylneuraminic acid (sialic acid) to form pyruvate and N-acetylmannosamine via a Schiff base intermediate. It prevents sialic acids from being recycled and returning to the cell surface. Involved in the N-glycolylneuraminic acid (Neu5Gc) degradation pathway. The chain is N-acetylneuraminate lyase from Sus scrofa (Pig).